The sequence spans 170 residues: MAEVDEFSAFRHENDVSIEQRIVYFINSLIVALVPVYLYHAIFFMSIDDHMIIYGSVTLFAAIVLTFAYNNIYRMKRLKLSASREHISIASKNKVGDKKKFAAAQKEVQALVTSHEAIAASIMYNNAVFLICVSIFSFIIFKNVPLVYNYIISISLGAGLTSFLSTSSKH.

At 1-24 (MAEVDEFSAFRHENDVSIEQRIVY) the chain is on the lumenal side. The helical transmembrane segment at 25–45 (FINSLIVALVPVYLYHAIFFM) threads the bilayer. Residues 46 to 51 (SIDDHM) are Cytoplasmic-facing. A helical membrane pass occupies residues 52–72 (IIYGSVTLFAAIVLTFAYNNI). Over 73-121 (YRMKRLKLSASREHISIASKNKVGDKKKFAAAQKEVQALVTSHEAIAAS) the chain is Lumenal. The helical transmembrane segment at 122-141 (IMYNNAVFLICVSIFSFIIF) threads the bilayer. Residues 142-145 (KNVP) lie on the Cytoplasmic side of the membrane. A helical transmembrane segment spans residues 146-168 (LVYNYIISISLGAGLTSFLSTSS).

This sequence belongs to the TRAP-gamma family. Heterotrimer of TRAP-alpha, TRAP-beta and TRAP-gamma.

It localises to the endoplasmic reticulum membrane. In terms of biological role, TRAP proteins are part of a complex whose function is to bind calcium to the ER membrane and thereby regulate the retention of ER resident proteins. In Dictyostelium discoideum (Social amoeba), this protein is Translocon-associated protein subunit gamma (ssr3).